The following is a 211-amino-acid chain: Protein-L-isoaspartate O-methyltransferase (211 aa).

Ser-62 is an active-site residue.

It belongs to the methyltransferase superfamily. L-isoaspartyl/D-aspartyl protein methyltransferase family.

The protein resides in the cytoplasm. The enzyme catalyses [protein]-L-isoaspartate + S-adenosyl-L-methionine = [protein]-L-isoaspartate alpha-methyl ester + S-adenosyl-L-homocysteine. Catalyzes the methyl esterification of L-isoaspartyl residues in peptides and proteins that result from spontaneous decomposition of normal L-aspartyl and L-asparaginyl residues. It plays a role in the repair and/or degradation of damaged proteins. This is Protein-L-isoaspartate O-methyltransferase from Shewanella putrefaciens (strain CN-32 / ATCC BAA-453).